The primary structure comprises 394 residues: Chalcone synthase 8 (394 aa).

The active site involves C165.

The protein belongs to the thiolase-like superfamily. Chalcone/stilbene synthases family.

The enzyme catalyses (E)-4-coumaroyl-CoA + 3 malonyl-CoA + 3 H(+) = 2',4,4',6'-tetrahydroxychalcone + 3 CO2 + 4 CoA. Its pathway is secondary metabolite biosynthesis; flavonoid biosynthesis. The primary product of this enzyme is 4,2',4',6'-tetrahydroxychalcone (also termed naringenin-chalcone or chalcone) which can under specific conditions spontaneously isomerize into naringenin. This Bromheadia finlaysoniana (Orchid) protein is Chalcone synthase 8 (CHS8).